We begin with the raw amino-acid sequence, 498 residues long: Glycerol kinase (498 aa).

An ADP-binding site is contributed by Thr-12. ATP-binding residues include Thr-12, Thr-13, and Ser-14. Thr-12 lines the sn-glycerol 3-phosphate pocket. An ADP-binding site is contributed by Arg-16. The sn-glycerol 3-phosphate site is built by Arg-82, Glu-83, Tyr-134, and Asp-243. Residues Arg-82, Glu-83, Tyr-134, Asp-243, and Gln-244 each coordinate glycerol. Residues Thr-265 and Gly-308 each coordinate ADP. Residues Thr-265, Gly-308, Gln-312, and Gly-409 each contribute to the ATP site. Residues Gly-409 and Asn-413 each coordinate ADP.

It belongs to the FGGY kinase family. As to quaternary structure, homotetramer and homodimer (in equilibrium).

It carries out the reaction glycerol + ATP = sn-glycerol 3-phosphate + ADP + H(+). The protein operates within polyol metabolism; glycerol degradation via glycerol kinase pathway; sn-glycerol 3-phosphate from glycerol: step 1/1. Activated by phosphorylation and inhibited by fructose 1,6-bisphosphate (FBP). In terms of biological role, key enzyme in the regulation of glycerol uptake and metabolism. Catalyzes the phosphorylation of glycerol to yield sn-glycerol 3-phosphate. The sequence is that of Glycerol kinase from Agathobacter rectalis (strain ATCC 33656 / DSM 3377 / JCM 17463 / KCTC 5835 / VPI 0990) (Eubacterium rectale).